Here is a 549-residue protein sequence, read N- to C-terminus: Nectin-3 (549 aa).

The N-terminal stretch at 1–57 (MARTLRPSPLCPGGGKAQLSSASLLGAGLLLQPPTPPPLLLLLFPLLLFSRLCGALA) is a signal peptide. At 58 to 404 (GPIIVEPHVT…ATIKDDTIAT (347 aa)) the chain is on the extracellular side. An Ig-like V-type domain is found at 59–165 (PIIVEPHVTA…GNAQSSTTVT (107 aa)). N-linked (GlcNAc...) asparagine glycans are attached at residues N73, N83, N125, N186, N222, and N331. C78 and C148 are disulfide-bonded. Ig-like C2-type domains lie at 170–258 (PTVS…KDIR) and 269–354 (PEVS…KVIY). Cystine bridges form between C193/C246 and C291/C338. The chain crosses the membrane as a helical span at residues 405-425 (IIASVVGGALFIVLVSVLAGI). Over 426–549 (FCYRRRRTFR…SVISRREWYV (124 aa)) the chain is Cytoplasmic.

Belongs to the nectin family. Cis- and trans-homodimer. Can form trans-heterodimers with NECTIN1, NECTIN2, PVR, IGSF4B/Necl-1 and with IGSF4. Interaction between NECTIN1 and NECTIN3 on the pre- and postsynaptic sites, respectively, initiates the formation of puncta adherentia junctions between axons and dendrites. Interacts (via Cytoplasmic domain) with AFDN, providing a connection with the actin cytoskeleton. Binds with low affinity to TIGIT. In terms of assembly, (Microbial infection) Interacts with C.difficile toxin TcdB, suggesting that it may contribute to TcdB toxin entry into cells. It was however shown that NECTIN3/PVRL3 does not act as a major receptor for TcdB. As to expression, predominantly expressed in testis and placenta as well as in many cell lines, including epithelial cell lines.

The protein localises to the cell membrane. It localises to the postsynaptic cell membrane. It is found in the cell junction. The protein resides in the adherens junction. In terms of biological role, cell adhesion molecule that promotes cell-cell adhesion through heterophilic trans-interactions with nectins-like or other nectins, such as trans-interaction with NECTIN2 at Sertoli-spermatid junctions. Trans-interaction with PVR induces activation of CDC42 and RAC small G proteins through common signaling molecules such as SRC and RAP1. Induces endocytosis-mediated down-regulation of PVR from the cell surface, resulting in reduction of cell movement and proliferation. Involved in axon guidance by promoting contacts between the commissural axons and the floor plate cells. Also involved in the formation of cell-cell junctions, including adherens junctions and synapses. Promotes formation of checkerboard-like cellular pattern of hair cells and supporting cells in the auditory epithelium via heterophilic interaction with NECTIN1: NECTIN1 is present in the membrane of hair cells and associates with NECTIN3 on supporting cells, thereby mediating heterotypic adhesion between these two cell types. Plays a role in the morphology of the ciliary body. The polypeptide is Nectin-3 (Homo sapiens (Human)).